The chain runs to 102 residues: Parathymosin (102 aa).

A disordered region spans residues M1–A102. N-acetylserine is present on S2. S2 carries the post-translational modification Phosphoserine. Residue K4 is modified to N6-acetyllysine. A phosphoserine mark is found at S5 and S13. The span at S13–V37 shows a compositional bias: basic and acidic residues. The residue at position 15 (K15) is an N6-acetyllysine. Over residues V38–E75 the composition is skewed to acidic residues. Phosphothreonine is present on T52. The residue at position 92 (K92) is an N6-acetyllysine.

The protein belongs to the pro/parathymosin family.

Parathymosin may mediate immune function by blocking the effect of prothymosin alpha which confers resistance to certain opportunistic infections. The polypeptide is Parathymosin (Ptms) (Rattus norvegicus (Rat)).